Consider the following 303-residue polypeptide: RING finger protein 148 (303 aa).

An N-terminal signal peptide occupies residues 1-34 (MSLLRITSSAHSSASSRLWRLGIFLLLSLPDSKG). An N-linked (GlcNAc...) asparagine glycan is attached at Asn-43. Residues 65 to 167 (HSPLERVSGV…LKGMELLHLI (103 aa)) form the PA domain. Residues 186–208 (WLSHYIMSLFTFLTATVAYLFLY) form a helical membrane-spanning segment. An RING-type; atypical zinc finger spans residues 256-297 (CVVCFDIYKPQDVVRILTCKHIFHKACIDPWLLAHRTCPMCK).

The protein localises to the membrane. The chain is RING finger protein 148 (RNF148) from Bos taurus (Bovine).